Consider the following 416-residue polypeptide: CinA-like protein (416 aa).

Belongs to the CinA family.

This Synechocystis sp. (strain ATCC 27184 / PCC 6803 / Kazusa) protein is CinA-like protein.